Reading from the N-terminus, the 473-residue chain is Photosystem II CP43 reaction center protein (473 aa).

Positions 1-14 (MKTLYSLRRFYHVE) are excised as a propeptide. Threonine 15 bears the N-acetylthreonine mark. Threonine 15 is modified (phosphothreonine). A run of 5 helical transmembrane segments spans residues 69–93 (LFEV…PHLA), 134–155 (LLGP…KDRN), 178–200 (KALY…RKIT), 255–275 (KPFA…LSYS), and 291–312 (WFNN…ASQA). Position 367 (glutamate 367) interacts with [CaMn4O5] cluster. Residues 447-471 (RARAAAAGFEKGIDRDFEPVLSMTP) form a helical membrane-spanning segment.

The protein belongs to the PsbB/PsbC family. PsbC subfamily. In terms of assembly, PSII is composed of 1 copy each of membrane proteins PsbA, PsbB, PsbC, PsbD, PsbE, PsbF, PsbH, PsbI, PsbJ, PsbK, PsbL, PsbM, PsbT, PsbX, PsbY, PsbZ, Psb30/Ycf12, at least 3 peripheral proteins of the oxygen-evolving complex and a large number of cofactors. It forms dimeric complexes. It depends on Binds multiple chlorophylls and provides some of the ligands for the Ca-4Mn-5O cluster of the oxygen-evolving complex. It may also provide a ligand for a Cl- that is required for oxygen evolution. PSII binds additional chlorophylls, carotenoids and specific lipids. as a cofactor.

The protein resides in the plastid. It is found in the chloroplast thylakoid membrane. Functionally, one of the components of the core complex of photosystem II (PSII). It binds chlorophyll and helps catalyze the primary light-induced photochemical processes of PSII. PSII is a light-driven water:plastoquinone oxidoreductase, using light energy to abstract electrons from H(2)O, generating O(2) and a proton gradient subsequently used for ATP formation. The polypeptide is Photosystem II CP43 reaction center protein (Aethionema cordifolium (Lebanon stonecress)).